The sequence spans 289 residues: 4-diphosphocytidyl-2-C-methyl-D-erythritol kinase (289 aa).

Lysine 10 is an active-site residue. 94–104 contacts ATP; the sequence is PVAAGLAGGSS. Aspartate 136 is an active-site residue.

Belongs to the GHMP kinase family. IspE subfamily.

It carries out the reaction 4-CDP-2-C-methyl-D-erythritol + ATP = 4-CDP-2-C-methyl-D-erythritol 2-phosphate + ADP + H(+). The protein operates within isoprenoid biosynthesis; isopentenyl diphosphate biosynthesis via DXP pathway; isopentenyl diphosphate from 1-deoxy-D-xylulose 5-phosphate: step 3/6. In terms of biological role, catalyzes the phosphorylation of the position 2 hydroxy group of 4-diphosphocytidyl-2C-methyl-D-erythritol. This is 4-diphosphocytidyl-2-C-methyl-D-erythritol kinase from Bacillus velezensis (strain DSM 23117 / BGSC 10A6 / LMG 26770 / FZB42) (Bacillus amyloliquefaciens subsp. plantarum).